The primary structure comprises 636 residues: Leucine-rich repeat and fibronectin type-III domain-containing protein 4 (636 aa).

Positions 1 to 16 (MAPPLLLLLLASGAAA) are cleaved as a signal peptide. An LRRNT domain is found at 17 to 48 (CPLPCVCQNLSESLSTLCAHRGLLFVPPNVDR). Over 17-518 (CPLPCVCQNL…LQAHVLGGTL (502 aa)) the chain is Extracellular. N-linked (GlcNAc...) asparagine glycosylation occurs at asparagine 25. LRR repeat units lie at residues 49 to 70 (RTVE…DFRN), 73 to 94 (GLVD…SFGD), 97 to 118 (SLRS…SLRG), 121 to 142 (NLQH…AFDD), 146 to 169 (SLED…GSMP), 170 to 191 (ALHT…VFAQ), and 194 to 215 (QLSR…PLFS). The LRRCT domain occupies 234-280 (NPLHCNCELLWLRRLARPDDLETCASPPTLAGRYFWAVPEGEFSCEP). Residues 281 to 367 (PLIARHTQRL…GEATARVELR (87 aa)) enclose the Ig-like domain. Cysteines 302 and 351 form a disulfide. N-linked (GlcNAc...) asparagine glycosylation occurs at asparagine 333. The Fibronectin type-III domain occupies 405-502 (SEPAVQVTEV…GCAHFSTLPA (98 aa)). The helical transmembrane segment at 519–539 (TVAVGGVLVAALLVFTVALLV) threads the bilayer. Residues 540–636 (RGRGAGNGRL…SAERLEESVV (97 aa)) are Cytoplasmic-facing. The tract at residues 556–585 (VQSQTNGGTSPMPKSHPPRSPPPRPQRSCS) is disordered. Residues 569–580 (KSHPPRSPPPRP) show a composition bias toward pro residues. Residues serine 585 and serine 627 each carry the phosphoserine modification. Residues 633-636 (ESVV) carry the PDZ-binding motif.

The protein belongs to the LRFN family. In terms of assembly, forms heteromeric complexes with LRFN1 and LRFN2. Can form heteromeric complexes with LRFN3 and LRFN5. Unable to form homophilic interactions across cell junctions. Interacts with DLG1, DLG2, DLG3 and DLG4. Post-translationally, glycosylated.

It localises to the membrane. Promotes neurite outgrowth in hippocampal neurons. May play a role in redistributing DLG4 to the cell periphery. This Rattus norvegicus (Rat) protein is Leucine-rich repeat and fibronectin type-III domain-containing protein 4 (Lrfn4).